The chain runs to 429 residues: Glutamate-1-semialdehyde 2,1-aminomutase 2 (429 aa).

N6-(pyridoxal phosphate)lysine is present on Lys268.

This sequence belongs to the class-III pyridoxal-phosphate-dependent aminotransferase family. HemL subfamily. As to quaternary structure, homodimer. Pyridoxal 5'-phosphate is required as a cofactor.

It localises to the cytoplasm. The enzyme catalyses (S)-4-amino-5-oxopentanoate = 5-aminolevulinate. It functions in the pathway porphyrin-containing compound metabolism; protoporphyrin-IX biosynthesis; 5-aminolevulinate from L-glutamyl-tRNA(Glu): step 2/2. The polypeptide is Glutamate-1-semialdehyde 2,1-aminomutase 2 (Bacillus anthracis (strain A0248)).